Reading from the N-terminus, the 321-residue chain is Ferredoxin--NADP reductase (321 aa).

7 residues coordinate FAD: glutamate 33, glutamine 41, tyrosine 46, valine 86, leucine 119, aspartate 277, and serine 318.

Belongs to the ferredoxin--NADP reductase type 2 family. In terms of assembly, homodimer. FAD serves as cofactor.

It catalyses the reaction 2 reduced [2Fe-2S]-[ferredoxin] + NADP(+) + H(+) = 2 oxidized [2Fe-2S]-[ferredoxin] + NADPH. In Lactococcus lactis subsp. cremoris (strain MG1363), this protein is Ferredoxin--NADP reductase.